The primary structure comprises 65 residues: MPKIKTVRGAAKRFKKTASGGFKRKQSHLRHILTKKTTKRKRHLRHKSMVAKADNVLVVACLPYA.

The disordered stretch occupies residues Met-1–Gln-26. A compositionally biased stretch (basic residues) spans Ala-10–Gln-26.

The protein belongs to the bacterial ribosomal protein bL35 family.

The polypeptide is Large ribosomal subunit protein bL35 (Actinobacillus succinogenes (strain ATCC 55618 / DSM 22257 / CCUG 43843 / 130Z)).